The following is a 686-amino-acid chain: Methionine--tRNA ligase (686 aa).

Residues 15–25 carry the 'HIGH' region motif; that stretch reads PYANGPIHLGH. Cys-146, Cys-149, Cys-159, and Cys-162 together coordinate Zn(2+). Residues 332-336 carry the 'KMSKS' region motif; the sequence is KMSKS. Lys-335 serves as a coordination point for ATP. The tRNA-binding domain maps to 585-686; that stretch reads TFAKTDLRVA…DGAKPGQRIM (102 aa).

Belongs to the class-I aminoacyl-tRNA synthetase family. MetG type 1 subfamily. In terms of assembly, homodimer. The cofactor is Zn(2+).

It is found in the cytoplasm. It carries out the reaction tRNA(Met) + L-methionine + ATP = L-methionyl-tRNA(Met) + AMP + diphosphate. In terms of biological role, is required not only for elongation of protein synthesis but also for the initiation of all mRNA translation through initiator tRNA(fMet) aminoacylation. The chain is Methionine--tRNA ligase from Psychromonas ingrahamii (strain DSM 17664 / CCUG 51855 / 37).